The primary structure comprises 64 residues: Large ribosomal subunit protein bL32 (64 aa).

Residues 1 to 64 are disordered; that stretch reads MAVQQNRKTR…APKHGDETEE (64 aa). Positions 7–16 are enriched in basic residues; that stretch reads RKTRSKRGMR.

The protein belongs to the bacterial ribosomal protein bL32 family.

The protein is Large ribosomal subunit protein bL32 of Methylococcus capsulatus (strain ATCC 33009 / NCIMB 11132 / Bath).